A 198-amino-acid polypeptide reads, in one-letter code: Holliday junction branch migration complex subunit RuvA (198 aa).

The segment at 1 to 63 is domain I; that stretch reads MYDYIKGQLT…EDAQLLFGFH (63 aa). The interval 64 to 142 is domain II; that stretch reads SEEEKDVFLK…EAPKEESSKP (79 aa). The segment at 143–147 is flexible linker; it reads PKAKQ. Residues 148-198 form a domain III region; the sequence is QGNEQLDEAVEALLALGYKATELKKIRAFFEGTSETAEQYIKSALKMLMKG.

The protein belongs to the RuvA family. Homotetramer. Forms an RuvA(8)-RuvB(12)-Holliday junction (HJ) complex. HJ DNA is sandwiched between 2 RuvA tetramers; dsDNA enters through RuvA and exits via RuvB. An RuvB hexamer assembles on each DNA strand where it exits the tetramer. Each RuvB hexamer is contacted by two RuvA subunits (via domain III) on 2 adjacent RuvB subunits; this complex drives branch migration. In the full resolvosome a probable DNA-RuvA(4)-RuvB(12)-RuvC(2) complex forms which resolves the HJ.

It is found in the cytoplasm. The RuvA-RuvB-RuvC complex processes Holliday junction (HJ) DNA during genetic recombination and DNA repair, while the RuvA-RuvB complex plays an important role in the rescue of blocked DNA replication forks via replication fork reversal (RFR). RuvA specifically binds to HJ cruciform DNA, conferring on it an open structure. The RuvB hexamer acts as an ATP-dependent pump, pulling dsDNA into and through the RuvAB complex. HJ branch migration allows RuvC to scan DNA until it finds its consensus sequence, where it cleaves and resolves the cruciform DNA. The sequence is that of Holliday junction branch migration complex subunit RuvA from Streptococcus equi subsp. zooepidemicus (strain H70).